Consider the following 92-residue polypeptide: Small ribosomal subunit protein uS19 (92 aa).

This sequence belongs to the universal ribosomal protein uS19 family.

Its function is as follows. Protein S19 forms a complex with S13 that binds strongly to the 16S ribosomal RNA. This chain is Small ribosomal subunit protein uS19, found in Yersinia pestis (strain Pestoides F).